Here is a 265-residue protein sequence, read N- to C-terminus: Glutamate racemase (265 aa).

Substrate is bound by residues 10-11 and 42-43; these read DS and YG. Residue Cys-73 is the Proton donor/acceptor of the active site. 74–75 is a substrate binding site; the sequence is NT. Catalysis depends on Cys-184, which acts as the Proton donor/acceptor. 185–186 is a substrate binding site; sequence TH.

Belongs to the aspartate/glutamate racemases family.

The enzyme catalyses L-glutamate = D-glutamate. Its pathway is cell wall biogenesis; peptidoglycan biosynthesis. Provides the (R)-glutamate required for cell wall biosynthesis. The protein is Glutamate racemase of Pediococcus pentosaceus (strain ATCC 25745 / CCUG 21536 / LMG 10740 / 183-1w).